The following is a 354-amino-acid chain: Probable L-ascorbate-6-phosphate lactonase UlaG (354 aa).

It belongs to the UlaG family. The cofactor is a divalent metal cation.

It localises to the cytoplasm. It catalyses the reaction L-ascorbate 6-phosphate + H2O = 3-dehydro-L-gulonate 6-phosphate. It functions in the pathway cofactor degradation; L-ascorbate degradation; D-xylulose 5-phosphate from L-ascorbate: step 1/4. Functionally, probably catalyzes the hydrolysis of L-ascorbate-6-P into 3-keto-L-gulonate-6-P. Is essential for L-ascorbate utilization under anaerobic conditions. In Escherichia coli O127:H6 (strain E2348/69 / EPEC), this protein is Probable L-ascorbate-6-phosphate lactonase UlaG.